Here is a 391-residue protein sequence, read N- to C-terminus: Trehalose-phosphate phosphatase (391 aa).

Catalysis depends on aspartate 147, which acts as the Nucleophile. Aspartate 147, aspartate 149, and aspartate 330 together coordinate Mg(2+). 147–149 (DFD) is a substrate binding site.

The protein belongs to the trehalose phosphatase family. The cofactor is Mg(2+).

The enzyme catalyses alpha,alpha-trehalose 6-phosphate + H2O = alpha,alpha-trehalose + phosphate. Its pathway is glycan biosynthesis; trehalose biosynthesis. Removes the phosphate from trehalose 6-phosphate to produce free trehalose. In Mycobacterium bovis (strain ATCC BAA-935 / AF2122/97), this protein is Trehalose-phosphate phosphatase (otsB).